We begin with the raw amino-acid sequence, 227 residues long: Lipoprotein-releasing system ATP-binding protein LolD (227 aa).

The 222-residue stretch at 6–227 (LVLDDIQKSY…RLDEGVLVSA (222 aa)) folds into the ABC transporter domain. An ATP-binding site is contributed by 43 to 50 (APSGAGKS).

It belongs to the ABC transporter superfamily. Lipoprotein translocase (TC 3.A.1.125) family. The complex is composed of two ATP-binding proteins (LolD) and two transmembrane proteins (LolC and LolE).

Its subcellular location is the cell inner membrane. Its function is as follows. Part of the ABC transporter complex LolCDE involved in the translocation of mature outer membrane-directed lipoproteins, from the inner membrane to the periplasmic chaperone, LolA. Responsible for the formation of the LolA-lipoprotein complex in an ATP-dependent manner. The sequence is that of Lipoprotein-releasing system ATP-binding protein LolD from Jannaschia sp. (strain CCS1).